The following is a 235-amino-acid chain: Orotidine 5'-phosphate decarboxylase (235 aa).

Substrate is bound by residues aspartate 17, lysine 39, aspartate 66–threonine 75, threonine 121, arginine 182, glutamine 191, glycine 211, and arginine 212. Lysine 68 acts as the Proton donor in catalysis.

This sequence belongs to the OMP decarboxylase family. Type 1 subfamily. Homodimer.

The catalysed reaction is orotidine 5'-phosphate + H(+) = UMP + CO2. Its pathway is pyrimidine metabolism; UMP biosynthesis via de novo pathway; UMP from orotate: step 2/2. Functionally, catalyzes the decarboxylation of orotidine 5'-monophosphate (OMP) to uridine 5'-monophosphate (UMP). This Rhodopseudomonas palustris (strain HaA2) protein is Orotidine 5'-phosphate decarboxylase.